A 63-amino-acid polypeptide reads, in one-letter code: Rubredoxin-2 (63 aa).

The region spanning 8–59 is the Rubredoxin-like domain; that stretch reads YKLFRCLQCGFEYDEAIGWPDDGIEPGTRWDEIPEDWSCPDCGAAKVDFEMV. Residues cysteine 13, cysteine 16, cysteine 46, and cysteine 49 each coordinate Fe cation.

It belongs to the rubredoxin family. It depends on Fe(3+) as a cofactor.

In terms of biological role, involved in the hydrocarbon hydroxylating system, which transfers electrons from NADH to rubredoxin reductase and then through rubredoxin to alkane 1 monooxygenase. The protein is Rubredoxin-2 (rubA2) of Rhodococcus erythropolis (Arthrobacter picolinophilus).